A 145-amino-acid chain; its full sequence is Bacilliredoxin GK1781 (145 aa).

It belongs to the bacilliredoxin family.

The polypeptide is Bacilliredoxin GK1781 (Geobacillus kaustophilus (strain HTA426)).